Consider the following 733-residue polypeptide: Phosphoribosylformylglycinamidine synthase subunit PurL (733 aa).

H44 is an active-site residue. The ATP site is built by Y47 and K86. Position 88 (E88) interacts with Mg(2+). Residues 89-92 (SHNH) and R111 contribute to the substrate site. The active-site Proton acceptor is H90. A Mg(2+)-binding site is contributed by D112. Q240 contributes to the substrate binding site. D268 lines the Mg(2+) pocket. 312-314 (ESQ) serves as a coordination point for substrate. The ATP site is built by D496 and G533. N534 contributes to the Mg(2+) binding site. Position 536 (S536) interacts with substrate.

This sequence belongs to the FGAMS family. As to quaternary structure, monomer. Part of the FGAM synthase complex composed of 1 PurL, 1 PurQ and 2 PurS subunits.

The protein resides in the cytoplasm. The enzyme catalyses N(2)-formyl-N(1)-(5-phospho-beta-D-ribosyl)glycinamide + L-glutamine + ATP + H2O = 2-formamido-N(1)-(5-O-phospho-beta-D-ribosyl)acetamidine + L-glutamate + ADP + phosphate + H(+). Its pathway is purine metabolism; IMP biosynthesis via de novo pathway; 5-amino-1-(5-phospho-D-ribosyl)imidazole from N(2)-formyl-N(1)-(5-phospho-D-ribosyl)glycinamide: step 1/2. Its function is as follows. Part of the phosphoribosylformylglycinamidine synthase complex involved in the purines biosynthetic pathway. Catalyzes the ATP-dependent conversion of formylglycinamide ribonucleotide (FGAR) and glutamine to yield formylglycinamidine ribonucleotide (FGAM) and glutamate. The FGAM synthase complex is composed of three subunits. PurQ produces an ammonia molecule by converting glutamine to glutamate. PurL transfers the ammonia molecule to FGAR to form FGAM in an ATP-dependent manner. PurS interacts with PurQ and PurL and is thought to assist in the transfer of the ammonia molecule from PurQ to PurL. The sequence is that of Phosphoribosylformylglycinamidine synthase subunit PurL from Wolinella succinogenes (strain ATCC 29543 / DSM 1740 / CCUG 13145 / JCM 31913 / LMG 7466 / NCTC 11488 / FDC 602W) (Vibrio succinogenes).